Consider the following 589-residue polypeptide: Sulfite reductase [NADPH] hemoprotein beta-component (589 aa).

4 residues coordinate [4Fe-4S] cluster: Cys443, Cys449, Cys488, and Cys492. Cys492 contributes to the siroheme binding site.

It belongs to the nitrite and sulfite reductase 4Fe-4S domain family. In terms of assembly, alpha(8)-beta(8). The alpha component is a flavoprotein, the beta component is a hemoprotein. Siroheme is required as a cofactor. [4Fe-4S] cluster serves as cofactor.

It catalyses the reaction hydrogen sulfide + 3 NADP(+) + 3 H2O = sulfite + 3 NADPH + 4 H(+). It functions in the pathway sulfur metabolism; hydrogen sulfide biosynthesis; hydrogen sulfide from sulfite (NADPH route): step 1/1. Functionally, component of the sulfite reductase complex that catalyzes the 6-electron reduction of sulfite to sulfide. This is one of several activities required for the biosynthesis of L-cysteine from sulfate. This is Sulfite reductase [NADPH] hemoprotein beta-component from Neisseria meningitidis serogroup C (strain 053442).